Here is a 646-residue protein sequence, read N- to C-terminus: Zinc finger protein 503 (646 aa).

The segment covering 1–11 (MSTAPSLSALR) has biased composition (polar residues). The interval 1–70 (MSTAPSLSAL…PPSDPLRQAN (70 aa)) is disordered. Residues 16–28 (SGGGGGGGGGGGA) show a composition bias toward gly residues. Residues 34–52 (SALSGNSSGPGPGSSPAGS) show a composition bias toward low complexity. Serine 102 is subject to Phosphoserine. The segment at 121–332 (SQIGKPDPSP…PSAPTSSSVL (212 aa)) is disordered. Residues 130 to 139 (PSSKLSSVAS) are compositionally biased toward low complexity. 2 stretches are compositionally biased toward gly residues: residues 140 to 152 (NGGG…GGAA) and 189 to 205 (GGGG…GGGV). At lysine 209 the chain carries N6-acetyllysine. A compositionally biased stretch (polar residues) spans 217–226 (ATCQPFTPRT). Residues 227-240 (GSPSSSASACSPGG) are compositionally biased toward low complexity. Residues serine 231 and serine 237 each carry the phosphoserine modification. Positions 250-259 (EGKDDKKDTD) are enriched in basic and acidic residues. Gly residues-rich tracts occupy residues 260–277 (VGGG…GGPT) and 300–315 (GGPG…GGSS). Over residues 316–330 (GSSSGSGPSAPTSSS) the composition is skewed to low complexity. Residues 514–542 (HICNWVSANGPCDKRFATSEELLSHLRTH) form a C2H2-type zinc finger. Arginine 636 bears the Omega-N-methylarginine mark.

Belongs to the Elbow/Noc family.

It is found in the nucleus. Functionally, may function as a transcriptional repressor. The sequence is that of Zinc finger protein 503 (ZNF503) from Homo sapiens (Human).